The following is a 396-amino-acid chain: Elongation factor Tu 1 (396 aa).

One can recognise a tr-type G domain in the interval 10 to 206; that stretch reads KPHCNIGTIG…AVDAYIPQPE (197 aa). The G1 stretch occupies residues 19-26; that stretch reads GHVDHGKT. A GTP-binding site is contributed by 19–26; that stretch reads GHVDHGKT. Threonine 26 provides a ligand contact to Mg(2+). A G2 region spans residues 60-64; the sequence is GITIS. The tract at residues 81–84 is G3; that stretch reads DCPG. Residues 81–85 and 136–139 each bind GTP; these read DCPGH and NKCD. Residues 136-139 are G4; the sequence is NKCD. Residues 174-176 form a G5 region; that stretch reads SAL.

Belongs to the TRAFAC class translation factor GTPase superfamily. Classic translation factor GTPase family. EF-Tu/EF-1A subfamily. Monomer.

It localises to the cytoplasm. It carries out the reaction GTP + H2O = GDP + phosphate + H(+). GTP hydrolase that promotes the GTP-dependent binding of aminoacyl-tRNA to the A-site of ribosomes during protein biosynthesis. This Rhodopseudomonas palustris (strain BisB5) protein is Elongation factor Tu 1.